Consider the following 328-residue polypeptide: Endochitinase (328 aa).

The first 27 residues, 1–27 (MKKNRMMMMIWSVGVVWMLLLVGGSYG), serve as a signal peptide directing secretion. One can recognise a Chitin-binding type-1 domain in the interval 28-68 (EQCGRQAGGALCPGGNCCSQFGWCGSTTDYCGPGCQSQCGG). Intrachain disulfides connect Cys-30-Cys-45, Cys-39-Cys-51, Cys-44-Cys-58, Cys-62-Cys-66, Cys-97-Cys-159, Cys-170-Cys-178, and Cys-277-Cys-309. Catalysis depends on Glu-141, which acts as the Proton donor. Positions 318 to 328 (SLLLSDLVTSQ) are cleaved as a propeptide — removed in mature form.

It belongs to the glycosyl hydrolase 19 family. Chitinase class I subfamily.

The protein resides in the vacuole. The enzyme catalyses Random endo-hydrolysis of N-acetyl-beta-D-glucosaminide (1-&gt;4)-beta-linkages in chitin and chitodextrins.. Defense against chitin-containing fungal pathogens. The chain is Endochitinase from Phaseolus vulgaris (Kidney bean).